The chain runs to 245 residues: Cuticle protein (245 aa).

The Chitin-binding type R&amp;R domain occupies 25–86; that stretch reads VSYAAAPALV…TGDSKSQQES (62 aa). Residues 79 to 100 form a disordered region; that stretch reads DSKSQQESRSGDVVQGSYSVVD. 3 tandem repeats follow at residues 92-95, 108-111, and 118-121.

Component of the cuticle of African malaria mosquito. The protein is Cuticle protein (Ccp84Ab) of Anopheles gambiae (African malaria mosquito).